Consider the following 227-residue polypeptide: Cytochrome c oxidase subunit 2 (227 aa).

Residues 1-14 are Mitochondrial intermembrane-facing; it reads MAHAAQMGLQDATS. Residues 15-45 traverse the membrane as a helical segment; the sequence is PIMEELISFHDHALMIIFLISFLVLYALFLT. Over 46 to 59 the chain is Mitochondrial matrix; the sequence is LTTKLTNTNITDAQ. A helical transmembrane segment spans residues 60–87; it reads EMETVWTILPAIILVLIALPSLRILYLT. Over 88–227 the chain is Mitochondrial intermembrane; that stretch reads DEINDPSFTI…IFEMGPVFTL (140 aa). Cu cation-binding residues include His161, Cys196, Glu198, Cys200, His204, and Met207. Mg(2+) is bound at residue Glu198.

Belongs to the cytochrome c oxidase subunit 2 family. As to quaternary structure, component of the cytochrome c oxidase (complex IV, CIV), a multisubunit enzyme composed of 14 subunits. The complex is composed of a catalytic core of 3 subunits MT-CO1, MT-CO2 and MT-CO3, encoded in the mitochondrial DNA, and 11 supernumerary subunits COX4I, COX5A, COX5B, COX6A, COX6B, COX6C, COX7A, COX7B, COX7C, COX8 and NDUFA4, which are encoded in the nuclear genome. The complex exists as a monomer or a dimer and forms supercomplexes (SCs) in the inner mitochondrial membrane with NADH-ubiquinone oxidoreductase (complex I, CI) and ubiquinol-cytochrome c oxidoreductase (cytochrome b-c1 complex, complex III, CIII), resulting in different assemblies (supercomplex SCI(1)III(2)IV(1) and megacomplex MCI(2)III(2)IV(2)). Found in a complex with TMEM177, COA6, COX18, COX20, SCO1 and SCO2. Interacts with TMEM177 in a COX20-dependent manner. Interacts with COX20. Interacts with COX16. It depends on Cu cation as a cofactor.

It localises to the mitochondrion inner membrane. The enzyme catalyses 4 Fe(II)-[cytochrome c] + O2 + 8 H(+)(in) = 4 Fe(III)-[cytochrome c] + 2 H2O + 4 H(+)(out). Its function is as follows. Component of the cytochrome c oxidase, the last enzyme in the mitochondrial electron transport chain which drives oxidative phosphorylation. The respiratory chain contains 3 multisubunit complexes succinate dehydrogenase (complex II, CII), ubiquinol-cytochrome c oxidoreductase (cytochrome b-c1 complex, complex III, CIII) and cytochrome c oxidase (complex IV, CIV), that cooperate to transfer electrons derived from NADH and succinate to molecular oxygen, creating an electrochemical gradient over the inner membrane that drives transmembrane transport and the ATP synthase. Cytochrome c oxidase is the component of the respiratory chain that catalyzes the reduction of oxygen to water. Electrons originating from reduced cytochrome c in the intermembrane space (IMS) are transferred via the dinuclear copper A center (CU(A)) of subunit 2 and heme A of subunit 1 to the active site in subunit 1, a binuclear center (BNC) formed by heme A3 and copper B (CU(B)). The BNC reduces molecular oxygen to 2 water molecules using 4 electrons from cytochrome c in the IMS and 4 protons from the mitochondrial matrix. The chain is Cytochrome c oxidase subunit 2 (MT-CO2) from Symphalangus syndactylus (Siamang).